We begin with the raw amino-acid sequence, 94 residues long: Scorpine-like-1 (94 aa).

An N-terminal signal peptide occupies residues 1–18; that stretch reads MNTKFTVLIFLGVIVVSY. The BetaSPN-type CS-alpha/beta domain maps to 54-94; it reads EYGCMMDISWNKDCQRHCQSTEQKDGICHGMKCKCGKPRSY. 3 cysteine pairs are disulfide-bonded: C57–C81, C67–C86, and C71–C88.

Belongs to the long chain scorpion toxin family. Class 3 subfamily. In terms of tissue distribution, expressed by the venom gland.

It is found in the secreted. Its function is as follows. Has antibacterial activity. This Urodacus yaschenkoi (Inland robust scorpion) protein is Scorpine-like-1.